The primary structure comprises 860 residues: Leucine--tRNA ligase (860 aa).

A 'HIGH' region motif is present at residues 42–52 (PYPSGRLHMGH). The 'KMSKS' region signature appears at 619–623 (KMSKS). ATP is bound at residue Lys622.

The protein belongs to the class-I aminoacyl-tRNA synthetase family.

Its subcellular location is the cytoplasm. The catalysed reaction is tRNA(Leu) + L-leucine + ATP = L-leucyl-tRNA(Leu) + AMP + diphosphate. The chain is Leucine--tRNA ligase from Escherichia coli O6:K15:H31 (strain 536 / UPEC).